The chain runs to 215 residues: Ribosomal RNA small subunit methyltransferase G (215 aa).

S-adenosyl-L-methionine-binding positions include G73, L78, A125–E126, and R140.

This sequence belongs to the methyltransferase superfamily. RNA methyltransferase RsmG family.

It is found in the cytoplasm. Specifically methylates the N7 position of guanine in position 518 of 16S rRNA. The chain is Ribosomal RNA small subunit methyltransferase G from Renibacterium salmoninarum (strain ATCC 33209 / DSM 20767 / JCM 11484 / NBRC 15589 / NCIMB 2235).